The primary structure comprises 336 residues: Fructose-1,6-bisphosphatase class 1 (336 aa).

Residues E92, D115, L117, and D118 each contribute to the Mg(2+) site. Substrate contacts are provided by residues 118-121 (DGSS), N211, Y244, 262-264 (YLY), and K274. E280 is a binding site for Mg(2+).

It belongs to the FBPase class 1 family. As to quaternary structure, homotetramer. It depends on Mg(2+) as a cofactor.

It localises to the cytoplasm. It catalyses the reaction beta-D-fructose 1,6-bisphosphate + H2O = beta-D-fructose 6-phosphate + phosphate. Its pathway is carbohydrate biosynthesis; gluconeogenesis. This Aliivibrio fischeri (strain MJ11) (Vibrio fischeri) protein is Fructose-1,6-bisphosphatase class 1.